The sequence spans 394 residues: Potassium channel subfamily K member 3 (394 aa).

Topologically, residues 1-8 are cytoplasmic; the sequence is MKRQNVRT. A helical transmembrane segment spans residues 9 to 29; that stretch reads LALIVCTFTYLLVGAAVFDAL. N-linked (GlcNAc...) asparagine glycosylation occurs at Asn53. Residues 78 to 101 constitute an intramembrane region (pore-forming); it reads WRFAGSFYFAITVITTIGYGHAAP. K(+) is bound by residues Thr93, Ile94, Gly95, and Tyr96. The segment at 93-98 is selectivity filter 1; it reads TIGYGH. A helical membrane pass occupies residues 108 to 128; it reads VFCMFYALLGIPLTLVMFQSL. The Cytoplasmic portion of the chain corresponds to 129–158; that stretch reads GERINTLVRYLLHRAKKGLGMRRADVSMAN. A helical membrane pass occupies residues 159 to 179; it reads MVLIGFFSCISTLCIGAAAFS. Positions 184–207 form an intramembrane region, pore-forming; sequence WTFFQAYYYCFITLTTIGFGDYVA. K(+)-binding residues include Thr199, Ile200, Gly201, and Phe202. A selectivity filter 2 region spans residues 199–204; sequence TIGFGD. Residues 223 to 243 traverse the membrane as a helical segment; it reads FSFVYILTGLTVIGAFLNLVV. The interval 243–248 is X-gate; the sequence is VLRFMT. The Cytoplasmic portion of the chain corresponds to 244–394; it reads LRFMTMNAED…RGLMKRRSSV (151 aa). Disordered regions lie at residues 266–286 and 338–357; these read RNGQ…DTAS and TCVE…SDTP. A compositionally biased stretch (gly residues) spans 269 to 278; the sequence is QAGGGGGGGS.

This sequence belongs to the two pore domain potassium channel (TC 1.A.1.8) family. Homodimer. Heterodimer with KCNK1. Heterodimer with KCNK9. As to expression, widespread expression in adult. Strongest expression in pancreas and placenta. Lower expression in brain, lung, prostate, heart, kidney, uterus, small intestine and colon.

Its subcellular location is the cell membrane. The enzyme catalyses K(+)(in) = K(+)(out). It catalyses the reaction Na(+)(in) = Na(+)(out). Its activity is regulated as follows. Inhibited by external acidification, diacylglycerol and anandamide. Activated by halothane and isoflurane. Functionally, k(+) channel that conducts voltage-dependent outward rectifying currents upon membrane depolarization. Voltage sensing is coupled to K(+) electrochemical gradient in an 'ion flux gating' mode where outward but not inward ion flow opens the gate. Changes ion selectivity and becomes permeable to Na(+) ions in response to extracellular acidification. Protonation of the pH sensor His-98 stabilizes C-type inactivation conformation likely converting the channel from outward K(+)-conducting, to inward Na(+)-conducting to nonconductive state. Homo- and heterodimerizes to form functional channels with distinct regulatory and gating properties. Allows K(+) currents with fast-gating kinetics important for the repolarization and hyperpolarization phases of action potentials. In cerebellar granule cells, heteromeric KCNK3:KCNK9 channel may hyperpolarize the resting membrane potential to limit intrinsic neuronal excitability, but once the action potential threshold is reached, it may support high-frequency action potential firing and increased neuronal excitability. Dispensable for central chemosensory respiration i.e. breathing controlled by brainstem CO2/pH, it rather conducts pH-sensitive currents and controls the firing rate of serotonergic raphe neurons involved in potentiation of the respiratory chemoreflex. Additionally, imparts chemosensitivity to type 1 cells in carotid bodies which respond to a decrease in arterial oxygen pressure or an increase in carbon dioxide pressure or pH to initiate adaptive changes in pulmonary ventilation. In adrenal gland, contributes to the maintenance of a hyperpolarized resting membrane potential of aldosterone-producing cells at zona glomerulosa and limits aldosterone release as part of a regulatory mechanism that controls arterial blood pressure and electrolyte homeostasis. In brown adipocytes, mediates K(+) efflux that counteracts norepinephrine-induced membrane depolarization, limits Ca(2+) efflux and downstream cAMP and PKA signaling, ultimately attenuating lipid oxidation and adaptive thermogenesis. This Homo sapiens (Human) protein is Potassium channel subfamily K member 3.